The chain runs to 100 residues: Urease subunit gamma (100 aa).

It belongs to the urease gamma subunit family. Heterotrimer of UreA (gamma), UreB (beta) and UreC (alpha) subunits. Three heterotrimers associate to form the active enzyme.

The protein localises to the cytoplasm. It catalyses the reaction urea + 2 H2O + H(+) = hydrogencarbonate + 2 NH4(+). It participates in nitrogen metabolism; urea degradation; CO(2) and NH(3) from urea (urease route): step 1/1. This is Urease subunit gamma from Cupriavidus pinatubonensis (strain JMP 134 / LMG 1197) (Cupriavidus necator (strain JMP 134)).